A 790-amino-acid polypeptide reads, in one-letter code: Choline transporter-like 2 (790 aa).

Residues P47 to V67 form a helical membrane-spanning segment. 2 N-linked (GlcNAc...) asparagine glycosylation sites follow: N102 and N259. The next 3 membrane-spanning stretches (helical) occupy residues I288–I308, I319–W339, and L344–F364. N-linked (GlcNAc...) asparagine glycosylation is present at N384. A run of 2 helical transmembrane segments spans residues L400–L420 and L449–L469. N483 carries an N-linked (GlcNAc...) asparagine glycan. 4 helical membrane-spanning segments follow: residues V545–F565, V592–I612, V691–T711, and F728–V748.

This sequence belongs to the CTL (choline transporter-like) family.

It localises to the membrane. The sequence is that of Choline transporter-like 2 from Anopheles gambiae (African malaria mosquito).